A 552-amino-acid chain; its full sequence is uncharacterized protein (552 aa).

This is an uncharacterized protein from Methanocaldococcus jannaschii (strain ATCC 43067 / DSM 2661 / JAL-1 / JCM 10045 / NBRC 100440) (Methanococcus jannaschii).